The chain runs to 115 residues: Holo-[acyl-carrier-protein] synthase (115 aa).

The Mg(2+) site is built by Asp8 and Glu50.

Belongs to the P-Pant transferase superfamily. AcpS family. Requires Mg(2+) as cofactor.

Its subcellular location is the cytoplasm. It catalyses the reaction apo-[ACP] + CoA = holo-[ACP] + adenosine 3',5'-bisphosphate + H(+). Its function is as follows. Transfers the 4'-phosphopantetheine moiety from coenzyme A to a Ser of acyl-carrier-protein. The protein is Holo-[acyl-carrier-protein] synthase of Cutibacterium acnes (strain DSM 16379 / KPA171202) (Propionibacterium acnes).